Consider the following 154-residue polypeptide: Large ribosomal subunit protein uL13 (154 aa).

This sequence belongs to the universal ribosomal protein uL13 family. In terms of assembly, part of the 50S ribosomal subunit.

Its function is as follows. This protein is one of the early assembly proteins of the 50S ribosomal subunit, although it is not seen to bind rRNA by itself. It is important during the early stages of 50S assembly. The sequence is that of Large ribosomal subunit protein uL13 from Brucella anthropi (strain ATCC 49188 / DSM 6882 / CCUG 24695 / JCM 21032 / LMG 3331 / NBRC 15819 / NCTC 12168 / Alc 37) (Ochrobactrum anthropi).